Reading from the N-terminus, the 187-residue chain is uncharacterized protein (187 aa).

Positions 131–187 (VAEKKDQRKKKPKVKTQGENAPVAKSAGENSGKLEEQKDERKGIAKDIDDFFGGIDG) are disordered. Residues 162 to 179 (GKLEEQKDERKGIAKDID) show a composition bias toward basic and acidic residues.

This is an uncharacterized protein from Haemophilus influenzae (Bacteriophage HP1).